A 120-amino-acid chain; its full sequence is Glycine cleavage system H protein (120 aa).

A Lipoyl-binding domain is found at 17-99 (VATVGITEHA…QGAAWFFKLK (83 aa)). The residue at position 58 (K58) is an N6-lipoyllysine.

Belongs to the GcvH family. In terms of assembly, the glycine cleavage system is composed of four proteins: P, T, L and H. (R)-lipoate is required as a cofactor.

Functionally, the glycine cleavage system catalyzes the degradation of glycine. The H protein shuttles the methylamine group of glycine from the P protein to the T protein. The protein is Glycine cleavage system H protein of Sinorhizobium medicae (strain WSM419) (Ensifer medicae).